The following is a 420-amino-acid chain: Serine hydroxymethyltransferase (420 aa).

Residues Leu121 and 125 to 127 (GHL) each bind (6S)-5,6,7,8-tetrahydrofolate. Lys229 carries the N6-(pyridoxal phosphate)lysine modification.

It belongs to the SHMT family. In terms of assembly, homodimer. Pyridoxal 5'-phosphate serves as cofactor.

It localises to the cytoplasm. It catalyses the reaction (6R)-5,10-methylene-5,6,7,8-tetrahydrofolate + glycine + H2O = (6S)-5,6,7,8-tetrahydrofolate + L-serine. It participates in one-carbon metabolism; tetrahydrofolate interconversion. It functions in the pathway amino-acid biosynthesis; glycine biosynthesis; glycine from L-serine: step 1/1. Functionally, catalyzes the reversible interconversion of serine and glycine with tetrahydrofolate (THF) serving as the one-carbon carrier. This reaction serves as the major source of one-carbon groups required for the biosynthesis of purines, thymidylate, methionine, and other important biomolecules. Also exhibits THF-independent aldolase activity toward beta-hydroxyamino acids, producing glycine and aldehydes, via a retro-aldol mechanism. In Aggregatibacter actinomycetemcomitans (Actinobacillus actinomycetemcomitans), this protein is Serine hydroxymethyltransferase.